Here is an 88-residue protein sequence, read N- to C-terminus: Phosphocarrier protein HPr (88 aa).

Residues 1-88 (MAQKTFTVTA…DTMSKEGLGE (88 aa)) enclose the HPr domain. A Phosphoserine modification is found at S12. Catalysis depends on H15, which acts as the Pros-phosphohistidine intermediate. Position 46 is a phosphoserine; by HPrK/P (S46).

Belongs to the HPr family.

It is found in the cytoplasm. Its activity is regulated as follows. Phosphorylation on Ser-46 inhibits the phosphoryl transfer from enzyme I to HPr. General (non sugar-specific) component of the phosphoenolpyruvate-dependent sugar phosphotransferase system (sugar PTS). This major carbohydrate active-transport system catalyzes the phosphorylation of incoming sugar substrates concomitantly with their translocation across the cell membrane. The phosphoryl group from phosphoenolpyruvate (PEP) is transferred to the phosphoryl carrier protein HPr by enzyme I. Phospho-HPr then transfers it to the PTS EIIA domain. Its function is as follows. P-Ser-HPr interacts with the catabolite control protein A (CcpA), forming a complex that binds to DNA at the catabolite response elements cre, operator sites preceding a large number of catabolite-regulated genes. Thus, P-Ser-HPr is a corepressor in carbon catabolite repression (CCR), a mechanism that allows bacteria to coordinate and optimize the utilization of available carbon sources. P-Ser-HPr also plays a role in inducer exclusion, in which it probably interacts with several non-PTS permeases and inhibits their transport activity. The sequence is that of Phosphocarrier protein HPr (ptsH) from Priestia megaterium (Bacillus megaterium).